Consider the following 392-residue polypeptide: Xyloside xylosyltransferase 1 (392 aa).

Residues methionine 1–alanine 19 lie on the Cytoplasmic side of the membrane. Residues leucine 20–glycine 42 form a helical; Signal-anchor for type II membrane protein membrane-spanning segment. The Lumenal portion of the chain corresponds to serine 43–aspartate 392. Residue methionine 103–threonine 105 participates in UDP-alpha-D-xylose binding. Residue aspartate 225 participates in Mn(2+) binding. Leucine 226 contributes to the UDP-alpha-D-xylose binding site. Aspartate 227 provides a ligand contact to Mn(2+). Residues histidine 262 to tryptophan 265 form an interaction with target proteins region. UDP-alpha-D-xylose is bound by residues serine 289, leucine 327, and glutamine 330. Residues glutamine 330 and tryptophan 359 each coordinate a glycoprotein. 2 disulfide bridges follow: cysteine 349–cysteine 374 and cysteine 356–cysteine 385. Histidine 382 is a binding site for Mn(2+). Asparagine 384 provides a ligand contact to a glycoprotein.

It belongs to the glycosyltransferase 8 family. In terms of assembly, homodimer. Dimer formation may be essential for the retention in endoplasmic reticulum. It depends on Mg(2+) as a cofactor. The cofactor is Mn(2+).

It is found in the endoplasmic reticulum membrane. It catalyses the reaction 3-O-[alpha-D-xylosyl-(1-&gt;3)-beta-D-glucosyl]-L-seryl-[EGF-like domain protein] + UDP-alpha-D-xylose = 3-O-[alpha-D-xylosyl-(1-&gt;3)-alpha-D-xylosyl-(1-&gt;3)-beta-D-glucosyl]-L-seryl-[EGF-like domain protein] + UDP + H(+). Alpha-1,3-xylosyltransferase, which elongates the O-linked xylose-glucose disaccharide attached to EGF-like repeats in the extracellular domain of target proteins by catalyzing the addition of the second xylose. Known targets include Notch proteins and coagulation factors, such as F9. In Mus musculus (Mouse), this protein is Xyloside xylosyltransferase 1 (Xxylt1).